The following is a 270-amino-acid chain: Formamidopyrimidine-DNA glycosylase (270 aa).

Proline 2 (schiff-base intermediate with DNA) is an active-site residue. The active-site Proton donor is the glutamate 3. Lysine 58 serves as the catalytic Proton donor; for beta-elimination activity. Residues histidine 91, arginine 110, and lysine 151 each contribute to the DNA site. The segment at leucine 236 to arginine 270 adopts an FPG-type zinc-finger fold. Residue arginine 260 is the Proton donor; for delta-elimination activity of the active site.

The protein belongs to the FPG family. As to quaternary structure, monomer. It depends on Zn(2+) as a cofactor.

It catalyses the reaction Hydrolysis of DNA containing ring-opened 7-methylguanine residues, releasing 2,6-diamino-4-hydroxy-5-(N-methyl)formamidopyrimidine.. It carries out the reaction 2'-deoxyribonucleotide-(2'-deoxyribose 5'-phosphate)-2'-deoxyribonucleotide-DNA = a 3'-end 2'-deoxyribonucleotide-(2,3-dehydro-2,3-deoxyribose 5'-phosphate)-DNA + a 5'-end 5'-phospho-2'-deoxyribonucleoside-DNA + H(+). Its function is as follows. Involved in base excision repair of DNA damaged by oxidation or by mutagenic agents. Acts as a DNA glycosylase that recognizes and removes damaged bases. Has a preference for oxidized purines, such as 7,8-dihydro-8-oxoguanine (8-oxoG). Has AP (apurinic/apyrimidinic) lyase activity and introduces nicks in the DNA strand. Cleaves the DNA backbone by beta-delta elimination to generate a single-strand break at the site of the removed base with both 3'- and 5'-phosphates. The chain is Formamidopyrimidine-DNA glycosylase from Marinobacter nauticus (strain ATCC 700491 / DSM 11845 / VT8) (Marinobacter aquaeolei).